A 142-amino-acid polypeptide reads, in one-letter code: HTH-type transcriptional regulator MntR (142 aa).

The region spanning 1–63 (MPTPSMEDYI…YEKYRGLVLT (63 aa)) is the HTH dtxR-type domain. Positions 8, 11, 77, 99, 102, and 103 each coordinate Mn(2+).

The protein belongs to the DtxR/MntR family. In terms of assembly, homodimer.

It localises to the cytoplasm. With respect to regulation, DNA binding is strongly activated by Mn(2+). In terms of biological role, central regulator of manganese homeostasis. This chain is HTH-type transcriptional regulator MntR, found in Bacillus cereus (strain G9842).